A 102-amino-acid polypeptide reads, in one-letter code: RNA-binding protein Hfq (102 aa).

One can recognise a Sm domain in the interval D9–V68. Residues S65–E102 are disordered. The segment covering A93 to E102 has biased composition (polar residues).

The protein belongs to the Hfq family. In terms of assembly, homohexamer.

Its function is as follows. RNA chaperone that binds small regulatory RNA (sRNAs) and mRNAs to facilitate mRNA translational regulation in response to envelope stress, environmental stress and changes in metabolite concentrations. Also binds with high specificity to tRNAs. This Photorhabdus laumondii subsp. laumondii (strain DSM 15139 / CIP 105565 / TT01) (Photorhabdus luminescens subsp. laumondii) protein is RNA-binding protein Hfq.